We begin with the raw amino-acid sequence, 229 residues long: 2-phytyl-1,4-naphtoquinone methyltransferase (229 aa).

Belongs to the class I-like SAM-binding methyltransferase superfamily. MenG/UbiE family.

It catalyses the reaction demethylphylloquinol + S-adenosyl-L-methionine = phylloquinol + S-adenosyl-L-homocysteine + H(+). It functions in the pathway cofactor biosynthesis; phylloquinone biosynthesis. Its function is as follows. Methyltransferase required for the conversion of 2-phytyl-1,4-beta-naphthoquinol to phylloquinol. The chain is 2-phytyl-1,4-naphtoquinone methyltransferase from Trichormus variabilis (strain ATCC 29413 / PCC 7937) (Anabaena variabilis).